A 208-amino-acid polypeptide reads, in one-letter code: Sec-independent protein translocase protein TatB (208 aa).

A helical transmembrane segment spans residues 1-21 (MFDIGVGELTLIAVVALVVLG). Positions 188-208 (DAGTPAASMPSAPAKIQEKQP) are disordered.

The protein belongs to the TatB family. The Tat system comprises two distinct complexes: a TatABC complex, containing multiple copies of TatA, TatB and TatC subunits, and a separate TatA complex, containing only TatA subunits. Substrates initially bind to the TatABC complex, which probably triggers association of the separate TatA complex to form the active translocon.

Its subcellular location is the cell inner membrane. Part of the twin-arginine translocation (Tat) system that transports large folded proteins containing a characteristic twin-arginine motif in their signal peptide across membranes. Together with TatC, TatB is part of a receptor directly interacting with Tat signal peptides. TatB may form an oligomeric binding site that transiently accommodates folded Tat precursor proteins before their translocation. This Xanthomonas axonopodis pv. citri (strain 306) protein is Sec-independent protein translocase protein TatB.